We begin with the raw amino-acid sequence, 89 residues long: Tuberculin-active protein (89 aa).

A disulfide bridge connects residues C27 and C59. Positions 61-89 (DGGSESEGKNGSQMRLIADVGPESATVAK) are disordered.

Its function is as follows. Tuberculin is the soluble, proteinaceous cell substance of the bacterium, to which infected animals become hypersensitive and react characteristically to dermal injections. The protein is Tuberculin-active protein of Mycobacterium tuberculosis.